The chain runs to 510 residues: Putative cytochrome P450 cyp-13B1 (510 aa).

Residue cysteine 456 coordinates heme.

Belongs to the cytochrome P450 family. Heme is required as a cofactor.

Cytochromes P450 are a group of heme-thiolate monooxygenases. They oxidize a variety of structurally unrelated compounds, including steroids, fatty acids, and xenobiotics. May play a role in the regulation of lifespan. The chain is Putative cytochrome P450 cyp-13B1 from Caenorhabditis elegans.